Reading from the N-terminus, the 354-residue chain is Selection and upkeep of intraepithelial T-cells protein 10 (354 aa).

Residues 1 to 52 (MFLRTQMEQSQADIFALIKPHFGVMESSASYLPGFFMTFLLLQTTVLTQAMS) form the signal peptide. The region spanning 53–141 (LDIQINIQVP…TNREKKRSVV (89 aa)) is the Ig-like V-type domain. The Extracellular portion of the chain corresponds to 53-158 (LDIQINIQVP…SEYMSLMSNK (106 aa)). A disulfide bond links Cys-71 and Cys-125. The N-linked (GlcNAc...) asparagine glycan is linked to Asn-129. A helical transmembrane segment spans residues 159 to 179 (FSCPLTYLFIIIFLNCLKGML). Residues 180-209 (DFCCLKGKPVYFRELINKIKEVLNIKMRAC) lie on the Cytoplasmic side of the membrane. Residues 210–230 (CTLIWEFLLIVLYIAFLPFYL) form a helical membrane-spanning segment. Residues 231-252 (KFRSRASILDDAYPLHSNWLWD) lie on the Extracellular side of the membrane. Residues 253–273 (ICIVLSVLMIFFTGLSLFLLW) form a helical membrane-spanning segment. Topologically, residues 274-354 (TLNCYGQMSY…RLDCSLNWKT (81 aa)) are cytoplasmic.

It belongs to the SKINT family. Expressed in skin and thymus.

Its subcellular location is the membrane. May act by engaging a cell surface molecule on immature T-cells in the embryonic thymus. The polypeptide is Selection and upkeep of intraepithelial T-cells protein 10 (Skint10) (Mus musculus (Mouse)).